Here is a 322-residue protein sequence, read N- to C-terminus: uncharacterized protein (322 aa).

A run of 8 helical transmembrane segments spans residues 7-27 (IQKI…IGAI), 54-74 (AFAL…LAMF), 87-107 (FVGF…LSGS), 128-148 (IAFC…ITFV), 162-182 (FLSV…YLLI), 209-229 (IGLT…LLPG), 249-269 (GIIS…LFLL), and 287-307 (VIYY…FELL).

To E.coli YbhN.

Its subcellular location is the cell membrane. This is an uncharacterized protein from Synechocystis sp. (strain ATCC 27184 / PCC 6803 / Kazusa).